A 148-amino-acid chain; its full sequence is 3-dehydroquinate dehydratase (148 aa).

Tyr-22 acts as the Proton acceptor in catalysis. Asn-73, His-79, and Asp-86 together coordinate substrate. The Proton donor role is filled by His-99. Residues 100-101 and Arg-110 contribute to the substrate site; that span reads LS.

It belongs to the type-II 3-dehydroquinase family. In terms of assembly, homododecamer.

The enzyme catalyses 3-dehydroquinate = 3-dehydroshikimate + H2O. Its pathway is metabolic intermediate biosynthesis; chorismate biosynthesis; chorismate from D-erythrose 4-phosphate and phosphoenolpyruvate: step 3/7. Its function is as follows. Catalyzes a trans-dehydration via an enolate intermediate. This is 3-dehydroquinate dehydratase from Prochlorococcus marinus (strain MIT 9211).